Reading from the N-terminus, the 427-residue chain is Putative F-box/FBD/LRR-repeat protein At4g13965 (427 aa).

The F-box domain occupies 13–61 (ADRISQLPEALIIQILSLLPTEVAVTTSVLSKQWQFLWKMLPKLNFDSL). LRR repeat units follow at residues 67–93 (FKTFSKNVKRALLSHKAPVLHSLHLIV), 98–122 (CNSMNTAKLIGIAFACNLRKLVLEV), 141–168 (TLELKYSILMDVPSSICLKSLRTLHLHY), 169–194 (VDFKDNESALNLLSGCPNLENLVVHR), 213–241 (LTIYTSSTVDPRAGYVINSPSLTYLKIVG), and 258–284 (SMIVSSQIINKNLLESLTSVKRLFLEF). Positions 346–396 (KWNKPKIVPECLLFHLETFMWKGYEWKRNDETEVAKYILSNTNRLKRATFF) constitute an FBD domain.

The chain is Putative F-box/FBD/LRR-repeat protein At4g13965 from Arabidopsis thaliana (Mouse-ear cress).